The sequence spans 140 residues: MGLCGSKTQPMPSQTTTVATKARTKPINRDTVKSKQELRHKEKKDKKKKTQLKSTTVPVVQRKEGSKLTDTSDPSKNKVSPKEAARLAAEKRFQETNEKYNKGELGKKLAQERAKSHKTRLMEEAEKKHAERERENMIYD.

A compositionally biased stretch (polar residues) spans 1-19; the sequence is MGLCGSKTQPMPSQTTTVA. Residues 1–140 form a disordered region; that stretch reads MGLCGSKTQP…ERERENMIYD (140 aa). G2 is lipidated: N-myristoyl glycine. Residue C4 is the site of S-palmitoyl cysteine attachment. Residues 27 to 40 show a composition bias toward basic and acidic residues; sequence INRDTVKSKQELRH. Positions 41–51 are enriched in basic residues; sequence KEKKDKKKKTQ. Over residues 73-140 the composition is skewed to basic and acidic residues; the sequence is DPSKNKVSPK…ERERENMIYD (68 aa).

To S.pombe new13. Myristoylated. Post-translationally, the N-myristoylated protein is further palmitoylated by ERF2, PFA4 and slightly by PFA5, but not by PFA3.

It is found in the cytoplasm. It localises to the cytosol. This is an uncharacterized protein from Saccharomyces cerevisiae (strain ATCC 204508 / S288c) (Baker's yeast).